The primary structure comprises 773 residues: MTISPPERGEKAKGAAPTPYDQPVDRDHAPIDYEKLNKPGFWSSKLSKGPKTTTWIWNLHADAHDFDTHLGDLEETSRKIFSAHFGHLAVVFIWMSAAFFHGARFSNYTGWLADPTNVKPGAQVVWPVVGQEILNADLGGNYQGLQITSGIFQMWRAWGITSEVQLMALAIGGVIMAALMLHGGIYHYHKAAPKLEWFRKIEPMLQHHQIALIGLGSIAWAGHLIHIGAPVAALLDAIDAGNPLVVDGVSIASAADVTNLAPRLCDPAVASQIFPSLAGRTVENFFTLNWWAFTDILTNKGGLNPVTGSLWMTDISHHHLAFGVFAIFGGHMWRNNVHGVGHSMKEIMDVHKGDPILFPAPKGHQGIFEFLSNSWHGQLSINLAMVGSASIVVAHHMYALPPYPYIAIDYPTVLGLFTHHMWIGGLFICGAAAHAGIAMIRDYDPAVHIDNVLDRILKARDAIISHLNWVCMWLGFHSFGLYIHNDVMRALGRPKDMFSDTGIQLQPFLAQWVQNLQQSAVGTGDLVGAGNLPGSVLSEVFNGNVVEVGGKVAIAPIPLGTADLMIHHVHAFTIHVTLLILLKGVLYARSSRLIPDKAQLGFRFPCDGPGRGGTCQVSSWDHVFLGLFWMYNSLSVVIFHFSWKMQSDVWGLTGGNFAQSSITINGWLRDFLWAQSSQVLTSYGQPISMYGLMFLGAHFVWAFSLMFLFSGRGYWQELFESIIWAHNKLKVAPTIQPRALSITQGRAVGVAHFLLGGIATTWAFFHARLIGLG.

The disordered stretch occupies residues Met1–Asp27. A run of 8 helical transmembrane segments spans residues Ile80–Ala103, Leu166–His189, Leu205–Ala229, Ile315–Trp333, Trp375–Tyr398, Leu414–Ile440, Ala462–His484, and Leu564–Leu582. [4Fe-4S] cluster is bound by residues Cys606 and Cys615. The next 2 helical transmembrane spans lie at His622–Trp643 and Ile687–Phe709. A divinylchlorophyll a'-binding site is contributed by His698. The divinyl chlorophyll a site is built by Met706 and Tyr714. Residue Trp715 participates in phylloquinone binding. Residues Ala747–Ala767 form a helical membrane-spanning segment.

This sequence belongs to the PsaA/PsaB family. The PsaA/B heterodimer binds the P700 divinyl chlorophyll special pair and subsequent electron acceptors. PSI consists of a core antenna complex that captures photons, and an electron transfer chain that converts photonic excitation into a charge separation. The cyanobacterial PSI reaction center is composed of one copy each of PsaA,B,C,D,E,F,I,J,K,L,M and X, and forms trimeric complexes. Requires PSI electron transfer chain: 5 divinyl chlorophyll a, 1 divinyl chlorophyll a', 2 phylloquinones and 3 4Fe-4S clusters. PSI core antenna: 90 divinyl chlorophyll a, 22 carotenoids, 3 phospholipids and 1 galactolipid. P700 is a divinyl chlorophyll a/divinyl chlorophyll a' dimer, A0 is one or more divinylchlorophyll a, A1 is one or both phylloquinones and FX is a shared 4Fe-4S iron-sulfur center. as cofactor.

It is found in the cellular thylakoid membrane. The enzyme catalyses reduced [plastocyanin] + hnu + oxidized [2Fe-2S]-[ferredoxin] = oxidized [plastocyanin] + reduced [2Fe-2S]-[ferredoxin]. PsaA and PsaB bind P700, the primary electron donor of photosystem I (PSI), as well as the electron acceptors A0, A1 and FX. PSI is a plastocyanin/cytochrome c6-ferredoxin oxidoreductase, converting photonic excitation into a charge separation, which transfers an electron from the donor P700 chlorophyll pair to the spectroscopically characterized acceptors A0, A1, FX, FA and FB in turn. Oxidized P700 is reduced on the lumenal side of the thylakoid membrane by plastocyanin or cytochrome c6. The protein is Photosystem I P700 chlorophyll a apoprotein A1 of Prochlorococcus marinus (strain SARG / CCMP1375 / SS120).